The chain runs to 465 residues: Sperm microtubule associated protein 2-like (465 aa).

Residues 1-29 (MENQEFLSSSAPSEVTDGQVSTEISTCSE) show a composition bias toward polar residues. A disordered region spans residues 1–140 (MENQEFLSSS…REAKETELLP (140 aa)). Basic and acidic residues-rich tracts occupy residues 40–70 (LDTH…QDQR) and 114–137 (KARE…KETE). THEG repeat units follow at residues 174–192 (RKCF…PKKQ), 214–233 (GALK…PKEV), 260–279 (PALF…PNGF), 297–316 (SLRI…AKGT), 333–352 (STLS…PRIK), 373–392 (AAMI…SKSV), 409–428 (ATTH…PNKR), and 446–465 (AALK…PLTR).

The sequence is that of Sperm microtubule associated protein 2-like from Homo sapiens (Human).